We begin with the raw amino-acid sequence, 607 residues long: Elongation factor 4 (607 aa).

The tr-type G domain occupies 11-193 (SKIRNFSIIA…QIVEKVPAPT (183 aa)). Residues 23-28 (DHGKST) and 140-143 (NKID) each bind GTP.

This sequence belongs to the TRAFAC class translation factor GTPase superfamily. Classic translation factor GTPase family. LepA subfamily.

The protein resides in the cell membrane. It carries out the reaction GTP + H2O = GDP + phosphate + H(+). Required for accurate and efficient protein synthesis under certain stress conditions. May act as a fidelity factor of the translation reaction, by catalyzing a one-codon backward translocation of tRNAs on improperly translocated ribosomes. Back-translocation proceeds from a post-translocation (POST) complex to a pre-translocation (PRE) complex, thus giving elongation factor G a second chance to translocate the tRNAs correctly. Binds to ribosomes in a GTP-dependent manner. The sequence is that of Elongation factor 4 from Bacillus cereus (strain ZK / E33L).